We begin with the raw amino-acid sequence, 354 residues long: Caffeate O-methyltransferase-like protein 2 (354 aa).

Gly-198, Asp-221, Met-242, and Lys-255 together coordinate S-adenosyl-L-homocysteine. His-259 serves as the catalytic Proton acceptor. Residues Glu-287 and Glu-319 contribute to the active site.

It belongs to the class I-like SAM-binding methyltransferase superfamily. Cation-independent O-methyltransferase family. COMT subfamily.

This is Caffeate O-methyltransferase-like protein 2 from Oryza sativa subsp. japonica (Rice).